Reading from the N-terminus, the 1077-residue chain is Deoxyribonuclease CdiA (1077 aa).

The segment at Ile67–Ser384 is FHA-2. A compositionally biased stretch (polar residues) spans Gln531 to Gly546. The tract at residues Gln531–Glu555 is disordered. The VENN CT cleavage motif signature appears at Val781–Asn784. The interval Met954–Lys1077 is DNase activity.

As to quaternary structure, interacts with cognate immunity protein CdiI-YPIII, which blocks its toxic DNase activity. Zn(2+) serves as cofactor.

Its subcellular location is the target cell. It is found in the target cell cytoplasm. Toxic component of a toxin-immunity protein module, which functions as a cellular contact-dependent growth inhibition (CDI) system. CDI modules allow bacteria to communicate with and inhibit the growth of closely related neighboring bacteria in a contact-dependent fashion. The C-terminal 123 residues (954-1077) has DNase activity in the presence of Zn(2+), converting supercoiled DNA into open-circular form. Toxic activity is neutralized by coexpression of the cognate immunity protein CdiI-YPIII, but not by non-cognate immunity proteins from other toxin-immunity modules. Expression of the DNase domain as a chimera allows bacteria to attack other non-immune bacteria which become filamentous and have lost DNA staining. Functionally, the CdiA protein is thought to be exported from the cell through the central lumen of CdiB, the other half of its two-partner system (TPS). The TPS domain probably remains associated with CdiB while the FHA-1 domain forms an extended filament with the receptor-binding domain (RBD) at its extremity; in the secretion arrested state the C-terminus of the RBD and YP domains form a hairpin-like structure as the FHA-2, PT and CT domains are periplasmic. The YP domain is probably responsible for this arrest at the point where it re-enters the host cell periplasm. Upon binding to a target cell outer membrane receptor a signal is transmitted to activate secretion. The filament elongates slightly, the rest of CdiA is secreted and the FHA-2 domain becomes stably associated with the target cell's outer membrane where it facilitates entry of the toxic CT domain into the target cell periplasm. From there the toxic CT domain is cleaved and gains access to the target cell cytoplasm via an inner membrane protein. This chain is Deoxyribonuclease CdiA, found in Yersinia pseudotuberculosis serotype O:3 (strain YPIII).